The sequence spans 146 residues: uncharacterized protein (146 aa).

Residues 119–128 (AQADLEHEES) are compositionally biased toward basic and acidic residues. Residues 119-146 (AQADLEHEESASIDQDEMVAIETRKTKK) form a disordered region.

This is an uncharacterized protein from Schizosaccharomyces pombe (strain 972 / ATCC 24843) (Fission yeast).